The chain runs to 418 residues: Histidine--tRNA ligase (418 aa).

The protein belongs to the class-II aminoacyl-tRNA synthetase family.

The protein resides in the cytoplasm. It carries out the reaction tRNA(His) + L-histidine + ATP = L-histidyl-tRNA(His) + AMP + diphosphate + H(+). The polypeptide is Histidine--tRNA ligase (Methanococcus vannielii (strain ATCC 35089 / DSM 1224 / JCM 13029 / OCM 148 / SB)).